The chain runs to 346 residues: MLFKQQVWLRQKLLVLGSLAVGSLLYLVARVGSLDRLQPICPVESRFGGAHNQAELPLRALQFKRGLLHEFRKGNSSKEQVHLHDLVQQLPKAIIIGVRKGGTRALLEMLNLHPAVVKASQEIHFFDNDENYAKGIEWYRKKMPFSYPQQITIEKSPAYFITEEVPERIYKMNSSIKLLIIVREPTTRAISDYTQVLEGKERKNKTYYKFEKLAIDPNTCEVNTKYKAVRTSIYTKHLERWLKYFPIEQFHIVDGDRLITEPLPELQLVEKFLNLPPRISQYNLYFNATRGFYCLRFNIIFNKCLAGSKGRIHPEVDPSVITKLRKFFHPFNQKFYQITGRTLNWP.

Residues 1–12 are Cytoplasmic-facing; the sequence is MLFKQQVWLRQK. The helical; Signal-anchor for type II membrane protein transmembrane segment at 13-32 threads the bilayer; the sequence is LLVLGSLAVGSLLYLVARVG. Residues 33-346 lie on the Lumenal side of the membrane; sequence SLDRLQPICP…QITGRTLNWP (314 aa). A glycan (N-linked (GlcNAc...) asparagine) is linked at Asn75. Residue 100 to 104 participates in 3'-phosphoadenylyl sulfate binding; it reads KGGTR. Residues 122–128 and 155–158 each bind substrate; these read EIHFFDN and KSPA. N-linked (GlcNAc...) asparagine glycosylation is present at Asn173. The 3'-phosphoadenylyl sulfate site is built by Arg183 and Ser191. Asn204 carries N-linked (GlcNAc...) asparagine glycosylation. 226-227 contributes to the substrate binding site; sequence YK. N-linked (GlcNAc...) asparagine glycosylation occurs at Asn287. Tyr293 contributes to the 3'-phosphoadenylyl sulfate binding site. Cys294 and Cys304 are joined by a disulfide. 309–313 serves as a coordination point for 3'-phosphoadenylyl sulfate; that stretch reads KGRIH.

It belongs to the sulfotransferase 1 family.

The protein localises to the golgi apparatus membrane. The catalysed reaction is alpha-D-glucosaminyl-[heparan sulfate](n) + 3'-phosphoadenylyl sulfate = 3-sulfo-alpha-D-glucosaminyl-[heparan sulfate](n) + adenosine 3',5'-bisphosphate + H(+). Functionally, sulfotransferase that utilizes 3'-phospho-5'-adenylyl sulfate (PAPS) to catalyze the transfer of a sulfo group to position 3 of glucosamine residues in heparan. Catalyzes the rate limiting step in the biosynthesis of heparan sulfate (HSact). This modification is a crucial step in the biosynthesis of anticoagulant heparan sulfate as it completes the structure of the antithrombin pentasaccharide binding site. Also generates GlcUA-GlcNS or IdoUA-GlcNS and IdoUA2S-GlcNH2. This Mus musculus (Mouse) protein is Heparan sulfate glucosamine 3-O-sulfotransferase 5 (Hs3st5).